Reading from the N-terminus, the 669-residue chain is DNA ligase (669 aa).

Residues 34–38 (DAEYD), 83–84 (SL), and E114 each bind NAD(+). The N6-AMP-lysine intermediate role is filled by K116. NAD(+) contacts are provided by R137, E171, K287, and K311. The Zn(2+) site is built by C405, C408, C423, and C428. The BRCT domain maps to 591–669 (NVESYFAGKT…EERFLQELNK (79 aa)).

This sequence belongs to the NAD-dependent DNA ligase family. LigA subfamily. Requires Mg(2+) as cofactor. It depends on Mn(2+) as a cofactor.

The catalysed reaction is NAD(+) + (deoxyribonucleotide)n-3'-hydroxyl + 5'-phospho-(deoxyribonucleotide)m = (deoxyribonucleotide)n+m + AMP + beta-nicotinamide D-nucleotide.. In terms of biological role, DNA ligase that catalyzes the formation of phosphodiester linkages between 5'-phosphoryl and 3'-hydroxyl groups in double-stranded DNA using NAD as a coenzyme and as the energy source for the reaction. It is essential for DNA replication and repair of damaged DNA. This Bacillus cereus (strain AH187) protein is DNA ligase.